Reading from the N-terminus, the 639-residue chain is Threonine--tRNA ligase (639 aa).

Residues 1-61 (MIHITLPDGS…TQDSPLSIVT (61 aa)) enclose the TGS domain. Positions 242–533 (DHRKLGRELD…LIEEHAGALP (292 aa)) are catalytic. Residues Cys333, His384, and His510 each coordinate Zn(2+).

This sequence belongs to the class-II aminoacyl-tRNA synthetase family. In terms of assembly, homodimer. Zn(2+) is required as a cofactor.

Its subcellular location is the cytoplasm. It catalyses the reaction tRNA(Thr) + L-threonine + ATP = L-threonyl-tRNA(Thr) + AMP + diphosphate + H(+). In terms of biological role, catalyzes the attachment of threonine to tRNA(Thr) in a two-step reaction: L-threonine is first activated by ATP to form Thr-AMP and then transferred to the acceptor end of tRNA(Thr). Also edits incorrectly charged L-seryl-tRNA(Thr). This Acidovorax ebreus (strain TPSY) (Diaphorobacter sp. (strain TPSY)) protein is Threonine--tRNA ligase.